Reading from the N-terminus, the 385-residue chain is Bifunctional chorismate mutase/prephenate dehydratase (385 aa).

A Chorismate mutase domain is found at 1–92; the sequence is MPSKNDLLSF…ESVLTQKKLL (92 aa). Substrate-binding residues include arginine 11, arginine 28, lysine 39, aspartate 48, glutamate 52, serine 84, and glutamine 88. In terms of domain architecture, Prephenate dehydratase spans 105–285; it reads SFSFLGPKGS…NITRFILLSR (181 aa). Residues 286 to 385 are regulatory; it reads KPVSISSKIP…PSENITPIIP (100 aa). In terms of domain architecture, ACT spans 299–376; the sequence is TLIFNTGQES…KFIKILGCYP (78 aa).

Its subcellular location is the cytoplasm. It catalyses the reaction chorismate = prephenate. The enzyme catalyses prephenate + H(+) = 3-phenylpyruvate + CO2 + H2O. Its pathway is amino-acid biosynthesis; L-phenylalanine biosynthesis; phenylpyruvate from prephenate: step 1/1. It functions in the pathway metabolic intermediate biosynthesis; prephenate biosynthesis; prephenate from chorismate: step 1/1. In terms of biological role, catalyzes the Claisen rearrangement of chorismate to prephenate and the decarboxylation/dehydration of prephenate to phenylpyruvate. The polypeptide is Bifunctional chorismate mutase/prephenate dehydratase (pheA) (Buchnera aphidicola subsp. Schizaphis graminum (strain Sg)).